Reading from the N-terminus, the 145-residue chain is Basic phospholipase A2 cL038 (145 aa).

The signal sequence occupies residues 1–21 (MYPAHLLVLLAVCVSLLGASA). A propeptide spanning residues 22–27 (IPPLPL) is cleaved from the precursor. 7 cysteine pairs are disulfide-bonded: cysteine 38–cysteine 98, cysteine 54–cysteine 144, cysteine 56–cysteine 72, cysteine 71–cysteine 125, cysteine 78–cysteine 118, cysteine 87–cysteine 111, and cysteine 105–cysteine 116. Residues tyrosine 55, glycine 57, and glycine 59 each contribute to the Ca(2+) site. Histidine 75 is an active-site residue. Residue aspartate 76 coordinates Ca(2+). The active site involves aspartate 119.

The protein belongs to the phospholipase A2 family. Group I subfamily. D49 sub-subfamily. It depends on Ca(2+) as a cofactor. In terms of tissue distribution, expressed by the venom gland.

The protein resides in the secreted. The enzyme catalyses a 1,2-diacyl-sn-glycero-3-phosphocholine + H2O = a 1-acyl-sn-glycero-3-phosphocholine + a fatty acid + H(+). Functionally, PLA2 catalyzes the calcium-dependent hydrolysis of the 2-acyl groups in 3-sn-phosphoglycerides. The sequence is that of Basic phospholipase A2 cL038 from Laticauda semifasciata (Black-banded sea krait).